The following is a 727-amino-acid chain: Iron-sulfur clusters transporter ATM1, mitochondrial (727 aa).

Residues 1–25 constitute a mitochondrion transit peptide; sequence MLIGGAQNRLYQLRTSNILGLLRTR. At 26 to 138 the chain is on the mitochondrial matrix side; sequence SALRVGSKVE…PRGNTKVKVR (113 aa). The segment at 87–107 is disordered; the sequence is KSKLPNEDTAHNASEKNSKKT. A compositionally biased stretch (basic and acidic residues) spans 90-107; it reads LPNEDTAHNASEKNSKKT. The helical transmembrane segment at 139–160 threads the bilayer; the sequence is VLLALALLIGAKVLNVQVPFFF. Positions 139–429 constitute an ABC transmembrane type-1 domain; the sequence is VLLALALLIG…LGSVYRELKQ (291 aa). Residues 161–183 are Mitochondrial intermembrane-facing; that stretch reads KQIIDGMNVDWSDATVALPAALG. Residues 184–207 form a helical membrane-spanning segment; sequence LTIMCYGLARFGAVLFGELRNAIF. Over 208–256 the chain is Mitochondrial matrix; sequence ARVAQNAIRNVSLQTFEHLMKLDLGWHLSRQTGGLTRAMDRGTKGISYV. The chain crosses the membrane as a helical span at residues 257 to 280; sequence LSAMVFHIIPITFEISVVCGILTY. Position 281 (Q281) is a topological domain, mitochondrial intermembrane. A helical transmembrane segment spans residues 282 to 302; it reads FGASFAGITFTTMLLYSIFTI. The Mitochondrial matrix portion of the chain corresponds to 303–368; sequence RTTAWRTRFR…SQVKVAQSLA (66 aa). Glutathione-binding positions include 308-312 and 371-374; these read RTRFR and NSGQ. The helical transmembrane segment at 369–387 threads the bilayer; that stretch reads FLNSGQSLIFTTALTGMMY. The Mitochondrial intermembrane portion of the chain corresponds to 388–402; that stretch reads MGCTGVIGGDLTVGD. The chain crosses the membrane as a helical span at residues 403–424; sequence LVLINQLVFQLSVPLNFLGSVY. G421 is a glutathione binding site. Over 425–727 the chain is Mitochondrial matrix; sequence RELKQSLIDM…ETLEKLNKSI (303 aa). One can recognise an ABC transporter domain in the interval 465-701; that stretch reads IKFENVTFGY…ENSLYKELWR (237 aa). Residues Y474 and 498–509 contribute to the ATP site; that span reads GPSGSGKSTVLK.

It belongs to the ABC transporter superfamily. ABCB family. Heavy Metal importer (TC 3.A.1.210) subfamily. In terms of assembly, homodimer.

Its subcellular location is the mitochondrion inner membrane. Functionally, performs an essential function in the generation of cytoplasmic iron-sulfur proteins by mediating the ATP-dependent export of Fe/S cluster precursors synthesized by NFS1 and other mitochondrial proteins. Hydrolyzes ATP. Binds glutathione and may function by transporting a glutathione-conjugated iron-sulfur compound. In Candida glabrata (strain ATCC 2001 / BCRC 20586 / JCM 3761 / NBRC 0622 / NRRL Y-65 / CBS 138) (Yeast), this protein is Iron-sulfur clusters transporter ATM1, mitochondrial.